A 229-amino-acid polypeptide reads, in one-letter code: Probable ribonuclease H (229 aa).

Residues 42 to 164 form the RNase H type-1 domain; it reads LQDISLEFDK…ADFLANSAAK (123 aa). A divalent metal cation contacts are provided by E60, D87, and D156.

The protein belongs to the RNase H family. The cofactor is a divalent metal cation.

The enzyme catalyses Endonucleolytic cleavage to 5'-phosphomonoester.. Functionally, endonuclease that specifically degrades the RNA of RNA-DNA hybrids. The protein is Probable ribonuclease H (RNH1) of Acanthamoeba polyphaga mimivirus (APMV).